Reading from the N-terminus, the 310-residue chain is Glutaminase (310 aa).

Serine 66, asparagine 117, glutamate 161, asparagine 168, tyrosine 192, tyrosine 244, and valine 262 together coordinate substrate.

It belongs to the glutaminase family. Homotetramer.

The enzyme catalyses L-glutamine + H2O = L-glutamate + NH4(+). The sequence is that of Glutaminase from Shigella boydii serotype 4 (strain Sb227).